Here is a 697-residue protein sequence, read N- to C-terminus: Zinc finger protein 12 (697 aa).

K3 is covalently cross-linked (Glycyl lysine isopeptide (Lys-Gly) (interchain with G-Cter in SUMO2)). One can recognise a KRAB domain in the interval 8 to 79 (VSFKDVAVDF…EGEFLLQSYP (72 aa)). Glycyl lysine isopeptide (Lys-Gly) (interchain with G-Cter in SUMO2) cross-links involve residues K98, K179, K182, K209, K215, K224, K239, and K267. 2 C2H2-type zinc fingers span residues 269 to 291 (YECS…QRTH) and 297 to 319 (YECN…QRTH). Glycyl lysine isopeptide (Lys-Gly) (interchain with G-Cter in SUMO2) cross-links involve residues K309, K323, K337, and K365. C2H2-type zinc fingers lie at residues 325–347 (YECN…QRTH), 353–375 (YECS…QRTH), 381–403 (YVCH…QKIH), 409–431 (YKCS…LRTH), 437–459 (YECN…YRTH), 465–487 (YECN…QRVH), 493–515 (YECN…HRTH), and 521–543 (YECS…RRIH). Glycyl lysine isopeptide (Lys-Gly) (interchain with G-Cter in SUMO2) cross-links involve residues K544 and K547. 5 consecutive C2H2-type zinc fingers follow at residues 549 to 571 (YECY…HRIH), 577 to 599 (YECS…QRTH), 605 to 627 (YECY…HRIH), 633 to 655 (FECN…YRTH), and 661 to 683 (YECT…QRIH).

It belongs to the krueppel C2H2-type zinc-finger protein family. Widely expressed in various adult tissues and embryonic developmental stages (isoform 3).

It localises to the nucleus. Transcriptional repressor which suppresses activation protein 1 (AP-1)- and serum response element (SRE)-mediated transcriptional activity. The protein is Zinc finger protein 12 (ZNF12) of Homo sapiens (Human).